The sequence spans 498 residues: Glutamyl-tRNA(Gln) amidotransferase subunit A (498 aa).

Active-site charge relay system residues include Lys-79 and Ser-154. The Acyl-ester intermediate role is filled by Ser-178.

This sequence belongs to the amidase family. GatA subfamily. As to quaternary structure, heterotrimer of A, B and C subunits.

The catalysed reaction is L-glutamyl-tRNA(Gln) + L-glutamine + ATP + H2O = L-glutaminyl-tRNA(Gln) + L-glutamate + ADP + phosphate + H(+). Its function is as follows. Allows the formation of correctly charged Gln-tRNA(Gln) through the transamidation of misacylated Glu-tRNA(Gln) in organisms which lack glutaminyl-tRNA synthetase. The reaction takes place in the presence of glutamine and ATP through an activated gamma-phospho-Glu-tRNA(Gln). This chain is Glutamyl-tRNA(Gln) amidotransferase subunit A, found in Psychrobacter cryohalolentis (strain ATCC BAA-1226 / DSM 17306 / VKM B-2378 / K5).